The primary structure comprises 205 residues: MNAVLQLEARTRETGSRASRRLRQAGFVPGIIYGPGVEPLAISVPTIQLERLVDRHGRGHLINAHVEGEANPRQVVIKQLQRDVLTAQVTHVDFLQVDIHRTITLTVPIAVVGEEQAKRRGLIVTHELAEVEIKCRPTEIPEAITLDISGVTEPGPVTVASLAAPPGVEVLEDPDTVVLSCTLGFGGVEEAEAEAEAGSSTGPAA.

Belongs to the bacterial ribosomal protein bL25 family. CTC subfamily. As to quaternary structure, part of the 50S ribosomal subunit; part of the 5S rRNA/L5/L18/L25 subcomplex. Contacts the 5S rRNA. Binds to the 5S rRNA independently of L5 and L18.

Functionally, this is one of the proteins that binds to the 5S RNA in the ribosome where it forms part of the central protuberance. The sequence is that of Large ribosomal subunit protein bL25A from Symbiobacterium thermophilum (strain DSM 24528 / JCM 14929 / IAM 14863 / T).